The following is a 247-amino-acid chain: ATP synthase subunit a, chloroplastic (247 aa).

Helical transmembrane passes span 38–58, 95–115, 134–154, 199–219, and 220–240; these read QVLITSWVVIAILLISTILVV, VPFIGTLFLFIFVSNWSGALL, INTTVALALLTSVAYFYAGIS, LVVVVLVSLVPLVVPIPVMFL, and GLFTSGIQALIFATLAAAYIG.

Belongs to the ATPase A chain family. In terms of assembly, F-type ATPases have 2 components, CF(1) - the catalytic core - and CF(0) - the membrane proton channel. CF(1) has five subunits: alpha(3), beta(3), gamma(1), delta(1), epsilon(1). CF(0) has four main subunits: a, b, b' and c.

Its subcellular location is the plastid. The protein localises to the chloroplast thylakoid membrane. Key component of the proton channel; it plays a direct role in the translocation of protons across the membrane. This Pisum sativum (Garden pea) protein is ATP synthase subunit a, chloroplastic.